A 396-amino-acid polypeptide reads, in one-letter code: DNA polymerase interacting tetratricopeptide repeat-containing, protein of 47 kDa (396 aa).

3 TPR repeats span residues 91-124, 129-162, and 163-196; these read ALNY…KTDN, AVLY…KPDY, and TKAR…DVDN.

This sequence belongs to the TTC4 family. As to quaternary structure, forms a complex with Hsp83 and Hsp70aa. Interacts with DNApol-alpha180; the interaction inhibits the activity of the DNA polymerase and occurs only in proliferating cells but not in quiescent cells. In terms of tissue distribution, more abundant in young embryos, pupae and females and a lower level expression seen in late embryos, larvae and males.

It localises to the nucleus. The protein localises to the nucleoplasm. The protein resides in the cytoplasm. In terms of biological role, may act as a co-chaperone for HSP83. The chain is DNA polymerase interacting tetratricopeptide repeat-containing, protein of 47 kDa (Dpit47) from Drosophila melanogaster (Fruit fly).